We begin with the raw amino-acid sequence, 1110 residues long: Coiled-coil domain-containing protein 150 (1110 aa).

Coiled-coil stretches lie at residues 122-250 (LENL…TSAS), 288-313 (QDLL…SDLN), 413-695 (AAHA…KEDN), and 728-1048 (SEIA…EAHR).

This is Coiled-coil domain-containing protein 150 (Ccdc150) from Mus musculus (Mouse).